Here is an 80-residue protein sequence, read N- to C-terminus: RNA-binding protein Hfq (80 aa).

In terms of domain architecture, Sm spans 10 to 69 (DPFLNALRKEHVPVSIYLVNGIKLQGNIESFDQYVVLLRNTVTQMVYKHAISTVVPARPV).

This sequence belongs to the Hfq family. As to quaternary structure, homohexamer.

Its function is as follows. RNA chaperone that binds small regulatory RNA (sRNAs) and mRNAs to facilitate mRNA translational regulation in response to envelope stress, environmental stress and changes in metabolite concentrations. Also binds with high specificity to tRNAs. This is RNA-binding protein Hfq from Burkholderia ambifaria (strain ATCC BAA-244 / DSM 16087 / CCUG 44356 / LMG 19182 / AMMD) (Burkholderia cepacia (strain AMMD)).